Here is a 503-residue protein sequence, read N- to C-terminus: Long-chain-aldehyde dehydrogenase (503 aa).

218–224 is an NAD(+) binding site; the sequence is GYGAEVG. Residues Glu-262 and Cys-301 contribute to the active site.

It belongs to the aldehyde dehydrogenase family. As to quaternary structure, homotetramer.

It carries out the reaction a long-chain fatty aldehyde + NAD(+) + H2O = a long-chain fatty acid + NADH + 2 H(+). With respect to regulation, completely inhibited by p-chloromercuribenzoate and N-ethylmaleimide. Strongly inhibited by iodoacetate. Inhibited by Pb(2+), Fe(3+), Ag(+) and Hg(2+) and partially inhibited by several other metal ions Mn(2+), Zn(2+) and Cu(2+). Functionally, aldehyde dehydrogenase that shows activity toward n-alkanals (C(4) to C(14)), with a preference for longer carbon chains. The best substrate is tetradecanal. The chain is Long-chain-aldehyde dehydrogenase (ald1) from Acinetobacter sp.